The chain runs to 104 residues: Large ribosomal subunit protein uL24 (104 aa).

Belongs to the universal ribosomal protein uL24 family. Part of the 50S ribosomal subunit.

In terms of biological role, one of two assembly initiator proteins, it binds directly to the 5'-end of the 23S rRNA, where it nucleates assembly of the 50S subunit. Its function is as follows. One of the proteins that surrounds the polypeptide exit tunnel on the outside of the subunit. The chain is Large ribosomal subunit protein uL24 from Methylobacterium radiotolerans (strain ATCC 27329 / DSM 1819 / JCM 2831 / NBRC 15690 / NCIMB 10815 / 0-1).